Here is a 387-residue protein sequence, read N- to C-terminus: Galactokinase (387 aa).

33–36 (EHTD) provides a ligand contact to substrate. Residues Ser-67 and 123–129 (GAGLSSS) contribute to the ATP site. Residues Ser-129 and Glu-161 each coordinate Mg(2+). The active-site Proton acceptor is Asp-173. Tyr-223 contributes to the substrate binding site.

It belongs to the GHMP kinase family. GalK subfamily.

The protein resides in the cytoplasm. It carries out the reaction alpha-D-galactose + ATP = alpha-D-galactose 1-phosphate + ADP + H(+). It functions in the pathway carbohydrate metabolism; galactose metabolism. Functionally, catalyzes the transfer of the gamma-phosphate of ATP to D-galactose to form alpha-D-galactose-1-phosphate (Gal-1-P). The sequence is that of Galactokinase from Lacticaseibacillus casei (Lactobacillus casei).